The sequence spans 309 residues: Porphobilinogen deaminase (309 aa).

Residue C241 is modified to S-(dipyrrolylmethanemethyl)cysteine.

This sequence belongs to the HMBS family. As to quaternary structure, monomer. Requires dipyrromethane as cofactor.

The catalysed reaction is 4 porphobilinogen + H2O = hydroxymethylbilane + 4 NH4(+). It functions in the pathway porphyrin-containing compound metabolism; protoporphyrin-IX biosynthesis; coproporphyrinogen-III from 5-aminolevulinate: step 2/4. Its function is as follows. Tetrapolymerization of the monopyrrole PBG into the hydroxymethylbilane pre-uroporphyrinogen in several discrete steps. The chain is Porphobilinogen deaminase from Bacillus mycoides (strain KBAB4) (Bacillus weihenstephanensis).